Consider the following 354-residue polypeptide: Stimulator of interferon genes protein 3 (354 aa).

Helical transmembrane passes span 20 to 40 (VTFA…FALW), 48 to 68 (INFV…GELI), 101 to 121 (YGSC…YALL), and 132 to 152 (YGIF…IVGI). 8 residues coordinate 3',3'-cGAMP: Asn178, Tyr183, Arg250, Ile251, Lys253, Glu272, Ser275, and Asn276.

It belongs to the STING family.

It localises to the membrane. Functionally, facilitator of innate immune signaling that acts as a sensor of second messenger signals produced by cyclic GMP-AMP synthase-like receptors (cGLRs) and promotes the production of type I interferon. Innate immune response is triggered in response to nucleotides from viruses and bacteria delivered to the cytoplasm. Acts by binding cyclic dinucleotides: recognizes and binds cyclic 3'-3' linked cGAMP (3'-3'-cGAMP), cyclic di-AMP (3',3'-c-di-AMP) and cyclic di-GMP (3',3'-c-di-GMP) second messengers produced by cGLRs in response to nucleotides in the cytosol, such as double-stranded RNA (dsRNA). Upon binding to 3'-3'-cGAMP, 3',3'-c-di-AMP or 3',3'-c-di-GMP, oligomerizes and promotes the recruitment and subsequent activation of the transcription factor IRF3 to induce expression of type I interferon. The polypeptide is Stimulator of interferon genes protein 3 (Stylophora pistillata (Smooth cauliflower coral)).